The sequence spans 337 residues: Secreted effector protein EspF(U) (337 aa).

Tandem repeats lie at residues 96-142 (IKPA…AEHG), 143-189 (IQPA…AEHG), 190-236 (IQPA…AEHG), 237-283 (IQPA…AEHG), and 284-330 (IQPA…AEHG). The 5 X 48 AA approximate tandem repeats stretch occupies residues 96–330 (IKPARSMAEH…RLMQHLAEHG (235 aa)). The disordered stretch occupies residues 291–312 (AEHIPPAPNWPAPTPPVQNEQS). The span at 295–306 (PPAPNWPAPTPP) shows a compositional bias: pro residues.

It belongs to the EspF(U)/TccP family. In terms of assembly, interacts with host BAIAP2 and host WASL/N-WASP. Can also interact with host proteins BAIAP2L1 and WAS/WASP.

The protein resides in the secreted. Its subcellular location is the host cytoplasm. In terms of biological role, required for efficient pedestal formation in host epithelial cells during infection. Acts as an intermediate between Tir (via host BAIAP2) and host WASL/N-WASP. Directly binds and activates WASL/N-WASP, which stimulates actin polymerization and leads to the formation of actin pedestals at the sites of bacterial adhesion. This is Secreted effector protein EspF(U) (espF(U)) from Escherichia coli O157:H7.